A 309-amino-acid chain; its full sequence is Tagatose-6-phosphate kinase (309 aa).

Belongs to the carbohydrate kinase PfkB family. LacC subfamily.

The catalysed reaction is D-tagatofuranose 6-phosphate + ATP = D-tagatofuranose 1,6-bisphosphate + ADP + H(+). It functions in the pathway carbohydrate metabolism; D-tagatose 6-phosphate degradation; D-glyceraldehyde 3-phosphate and glycerone phosphate from D-tagatose 6-phosphate: step 1/2. The protein is Tagatose-6-phosphate kinase of Streptococcus pneumoniae (strain P1031).